Here is a 351-residue protein sequence, read N- to C-terminus: Phosphoribosylformylglycinamidine cyclo-ligase (351 aa).

This sequence belongs to the AIR synthase family.

It is found in the cytoplasm. It catalyses the reaction 2-formamido-N(1)-(5-O-phospho-beta-D-ribosyl)acetamidine + ATP = 5-amino-1-(5-phospho-beta-D-ribosyl)imidazole + ADP + phosphate + H(+). Its pathway is purine metabolism; IMP biosynthesis via de novo pathway; 5-amino-1-(5-phospho-D-ribosyl)imidazole from N(2)-formyl-N(1)-(5-phospho-D-ribosyl)glycinamide: step 2/2. The sequence is that of Phosphoribosylformylglycinamidine cyclo-ligase from Xylella fastidiosa (strain 9a5c).